Here is a 391-residue protein sequence, read N- to C-terminus: MEHTWRWFGPNDETTLTDIRQTGATGVVTALHEIPNGEVWPVEAIKARKAMIEAHTLRWSVVESVPVHEDIKKRTGNYQEYIQNYKQTLLNLAECGIDTVCYNFMPVLDWTRTDLDYELPDGSRALRFDQTAFAAFELYILERKGAESEYSDEEKAQAKIFLENLKAEDKDRLVANIIAGLPGSEESYTIEQFREKLDEYAGIDKDKLREHLKLFLEEIVPAAEQGGLRLAIHPDDPPRPILGLPRVVSVKDDIEWLLGAVPSPVNGITLCTGSYGVRADNDLVDMVQRFGSNIFFTHLRSTKREEVAGSFHEASHLGGDVDMVGVVRALLVEEKKRNDNNAPSLIPMRPDHGHQILNDLEKNSKPGYSKLGRMKGLAEVRGLELGLKSTL.

The protein belongs to the mannonate dehydratase family. The cofactor is Fe(2+). Requires Mn(2+) as cofactor.

The enzyme catalyses D-mannonate = 2-dehydro-3-deoxy-D-gluconate + H2O. The protein operates within carbohydrate metabolism; pentose and glucuronate interconversion. Its function is as follows. Catalyzes the dehydration of D-mannonate. The chain is Mannonate dehydratase from Marinomonas sp. (strain MWYL1).